The primary structure comprises 434 residues: Enolase (434 aa).

Substrate contacts are provided by His158 and Glu167. Catalysis depends on Glu210, which acts as the Proton donor. 3 residues coordinate Mg(2+): Asp245, Glu294, and Asp319. Residues Glu294 and Asp319 each coordinate substrate. Lys344 (proton acceptor) is an active-site residue. Substrate is bound by residues Ser371 to Ser374 and Lys395.

This sequence belongs to the enolase family. Homodimer. It depends on Mg(2+) as a cofactor.

It is found in the cytoplasm. The catalysed reaction is (2R)-2-phosphoglycerate = phosphoenolpyruvate + H2O. The protein operates within carbohydrate degradation; glycolysis; pyruvate from D-glyceraldehyde 3-phosphate: step 4/5. This Schistosoma mansoni (Blood fluke) protein is Enolase (ENO).